Reading from the N-terminus, the 64-residue chain is Conotoxin Vc1.3 (64 aa).

An N-terminal signal peptide occupies residues 1 to 21 (MGMRMMFTVFLLVVLATTVVS). Positions 22 to 43 (FTSDRASDGRKAAASDLITLTI) are excised as a propeptide. Cystine bridges form between cysteine 46–cysteine 52 and cysteine 47–cysteine 60. At cysteine 60 the chain carries Cysteine amide.

Belongs to the conotoxin A superfamily. Expressed by the venom duct.

The protein resides in the secreted. Functionally, may act as a toxin. This Conus victoriae (Queen Victoria cone) protein is Conotoxin Vc1.3.